We begin with the raw amino-acid sequence, 116 residues long: Beta-2-microglobulin (116 aa).

The first 19 residues, 1–19 (MKFLLSFVVLAVFSASAFA), serve as a signal peptide directing secretion. Residues 24–111 (PKIQVYSRNP…RHLKETKNIS (88 aa)) form the Ig-like C1-type domain. Residues Cys44 and Cys99 are joined by a disulfide bond.

Belongs to the beta-2-microglobulin family. In terms of assembly, heterodimer of an alpha chain and a beta chain. Beta-2-microglobulin is the beta-chain of major histocompatibility complex class I molecules.

Its subcellular location is the secreted. Component of the class I major histocompatibility complex (MHC). Involved in the presentation of peptide antigens to the immune system. This is Beta-2-microglobulin (b2m) from Ictalurus punctatus (Channel catfish).